A 396-amino-acid chain; its full sequence is UPF0046 protein T07D4.2 (396 aa).

The segment at 73-94 (SRRGSIASGIPMDKKTRRKLSN) is disordered.

The protein belongs to the UPF0046 family.

The chain is UPF0046 protein T07D4.2 from Caenorhabditis elegans.